The chain runs to 276 residues: Urease accessory protein UreD (276 aa).

It belongs to the UreD family. As to quaternary structure, ureD, UreF and UreG form a complex that acts as a GTP-hydrolysis-dependent molecular chaperone, activating the urease apoprotein by helping to assemble the nickel containing metallocenter of UreC. The UreE protein probably delivers the nickel.

The protein resides in the cytoplasm. Required for maturation of urease via the functional incorporation of the urease nickel metallocenter. The chain is Urease accessory protein UreD from Paracidovorax citrulli (strain AAC00-1) (Acidovorax citrulli).